Here is a 360-residue protein sequence, read N- to C-terminus: Mitogen-activated protein kinase 14 (360 aa).

S2 is modified (N-acetylserine). Position 2 is a phosphoserine (S2). T16 bears the Phosphothreonine mark. Positions 24–308 constitute a Protein kinase domain; it reads YQNLSPVGSG…AAQALAHAYF (285 aa). ATP is bound by residues 30-38 and K53; that span reads VGSGAYGSV. 2 positions are modified to N6-acetyllysine: K53 and K152. D168 acts as the Proton acceptor in catalysis. T180 is modified (phosphothreonine; by MAP2K3, MAP2K4, MAP2K6 and autocatalysis). The TXY motif lies at 180–182; that stretch reads TGY. At Y182 the chain carries Phosphotyrosine; by MAP2K3, MAP2K4, MAP2K6 and autocatalysis. Position 263 is a phosphothreonine (T263). Y323 carries the phosphotyrosine; by ZAP70 modification.

This sequence belongs to the protein kinase superfamily. CMGC Ser/Thr protein kinase family. MAP kinase subfamily. In terms of assembly, component of a signaling complex containing at least AKAP13, PKN1, MAPK14, ZAK and MAP2K3. Within this complex, AKAP13 interacts directly with PKN1, which in turn recruits MAPK14, MAP2K3 and ZAK. Binds to a kinase interaction motif within the protein tyrosine phosphatase, PTPRR. This interaction retains MAPK14 in the cytoplasm and prevents nuclear accumulation. Interacts with SPAG9 and GADD45A. Interacts with CDC25B, CDC25C, DUSP1, DUSP10, DUSP16, NP60, SUPT20H and TAB1. Interacts with casein kinase II subunits CSNK2A1 and CSNK2B. Interacts with PPM1D. Interacts with CDK5RAP3; recruits PPM1D to MAPK14 and may regulate its dephosphorylation. Interacts with DUSP2; this interaction does not lead to catalytic activation of DUSP2 and dephosphrylation of MAPK14. It depends on Mg(2+) as a cofactor. Dually phosphorylated on Thr-180 and Tyr-182 by the MAP2Ks MAP2K3/MKK3, MAP2K4/MKK4 and MAP2K6/MKK6 in response to inflammatory citokines, environmental stress or growth factors, which activates the enzyme. Dual phosphorylation can also be mediated by TAB1-mediated autophosphorylation. TCR engagement in T-cells also leads to Tyr-323 phosphorylation by ZAP70. Dephosphorylated and inactivated by DUPS1, DUSP10 and DUSP16. PPM1D also mediates dephosphorylation and inactivation of MAPK14. Post-translationally, acetylated at Lys-53 and Lys-152 by KAT2B and EP300. Acetylation at Lys-53 increases the affinity for ATP and enhances kinase activity. Lys-53 and Lys-152 are deacetylated by HDAC3. In terms of processing, ubiquitinated. Ubiquitination leads to degradation by the proteasome pathway. Brain, heart, placenta, pancreas and skeletal muscle. Expressed to a lesser extent in lung, liver and kidney.

It localises to the cytoplasm. The protein resides in the nucleus. It carries out the reaction L-seryl-[protein] + ATP = O-phospho-L-seryl-[protein] + ADP + H(+). The catalysed reaction is L-threonyl-[protein] + ATP = O-phospho-L-threonyl-[protein] + ADP + H(+). Its activity is regulated as follows. Activated by cell stresses such as DNA damage, heat shock, osmotic shock, anisomycin and sodium arsenite, as well as pro-inflammatory stimuli such as bacterial lipopolysaccharide (LPS) and interleukin-1. Activation occurs through dual phosphorylation of Thr-180 and Tyr-182 by either of two dual specificity kinases, MAP2K3/MKK3 or MAP2K6/MKK6, and potentially also MAP2K4/MKK4, as well as by TAB1-mediated autophosphorylation. MAPK14 phosphorylated on both Thr-180 and Tyr-182 is 10-20-fold more active than MAPK14 phosphorylated only on Thr-180, whereas MAPK14 phosphorylated on Tyr-182 alone is inactive. whereas Thr-180 is necessary for catalysis, Tyr-182 may be required for auto-activation and substrate recognition. Phosphorylated at Tyr-323 by ZAP70 in an alternative activation pathway in response to TCR signaling in T-cells. This alternative pathway is inhibited by GADD45A. Inhibited by dual specificity phosphatases, such as DUSP1, DUSP10, and DUSP16. Specifically inhibited by the binding of pyridinyl-imidazole compounds, which are cytokine-suppressive anti-inflammatory drugs (CSAID). Isoform Mxi2 is 100-fold less sensitive to these agents than the other isoforms and is not inhibited by DUSP1. Isoform Exip is not activated by MAP2K6. SB203580 is an inhibitor of MAPK14. Its function is as follows. Serine/threonine kinase which acts as an essential component of the MAP kinase signal transduction pathway. MAPK14 is one of the four p38 MAPKs which play an important role in the cascades of cellular responses evoked by extracellular stimuli such as pro-inflammatory cytokines or physical stress leading to direct activation of transcription factors. Accordingly, p38 MAPKs phosphorylate a broad range of proteins and it has been estimated that they may have approximately 200 to 300 substrates each. Some of the targets are downstream kinases which are activated through phosphorylation and further phosphorylate additional targets. RPS6KA5/MSK1 and RPS6KA4/MSK2 can directly phosphorylate and activate transcription factors such as CREB1, ATF1, the NF-kappa-B isoform RELA/NFKB3, STAT1 and STAT3, but can also phosphorylate histone H3 and the nucleosomal protein HMGN1. RPS6KA5/MSK1 and RPS6KA4/MSK2 play important roles in the rapid induction of immediate-early genes in response to stress or mitogenic stimuli, either by inducing chromatin remodeling or by recruiting the transcription machinery. On the other hand, two other kinase targets, MAPKAPK2/MK2 and MAPKAPK3/MK3, participate in the control of gene expression mostly at the post-transcriptional level, by phosphorylating ZFP36 (tristetraprolin) and ELAVL1, and by regulating EEF2K, which is important for the elongation of mRNA during translation. MKNK1/MNK1 and MKNK2/MNK2, two other kinases activated by p38 MAPKs, regulate protein synthesis by phosphorylating the initiation factor EIF4E2. MAPK14 also interacts with casein kinase II, leading to its activation through autophosphorylation and further phosphorylation of TP53/p53. In the cytoplasm, the p38 MAPK pathway is an important regulator of protein turnover. For example, CFLAR is an inhibitor of TNF-induced apoptosis whose proteasome-mediated degradation is regulated by p38 MAPK phosphorylation. In a similar way, MAPK14 phosphorylates the ubiquitin ligase SIAH2, regulating its activity towards EGLN3. MAPK14 may also inhibit the lysosomal degradation pathway of autophagy by interfering with the intracellular trafficking of the transmembrane protein ATG9. Another function of MAPK14 is to regulate the endocytosis of membrane receptors by different mechanisms that impinge on the small GTPase RAB5A. In addition, clathrin-mediated EGFR internalization induced by inflammatory cytokines and UV irradiation depends on MAPK14-mediated phosphorylation of EGFR itself as well as of RAB5A effectors. Ectodomain shedding of transmembrane proteins is regulated by p38 MAPKs as well. In response to inflammatory stimuli, p38 MAPKs phosphorylate the membrane-associated metalloprotease ADAM17. Such phosphorylation is required for ADAM17-mediated ectodomain shedding of TGF-alpha family ligands, which results in the activation of EGFR signaling and cell proliferation. Another p38 MAPK substrate is FGFR1. FGFR1 can be translocated from the extracellular space into the cytosol and nucleus of target cells, and regulates processes such as rRNA synthesis and cell growth. FGFR1 translocation requires p38 MAPK activation. In the nucleus, many transcription factors are phosphorylated and activated by p38 MAPKs in response to different stimuli. Classical examples include ATF1, ATF2, ATF6, ELK1, PTPRH, DDIT3, TP53/p53 and MEF2C and MEF2A. The p38 MAPKs are emerging as important modulators of gene expression by regulating chromatin modifiers and remodelers. The promoters of several genes involved in the inflammatory response, such as IL6, IL8 and IL12B, display a p38 MAPK-dependent enrichment of histone H3 phosphorylation on 'Ser-10' (H3S10ph) in LPS-stimulated myeloid cells. This phosphorylation enhances the accessibility of the cryptic NF-kappa-B-binding sites marking promoters for increased NF-kappa-B recruitment. Phosphorylates CDC25B and CDC25C which is required for binding to 14-3-3 proteins and leads to initiation of a G2 delay after ultraviolet radiation. Phosphorylates TIAR following DNA damage, releasing TIAR from GADD45A mRNA and preventing mRNA degradation. The p38 MAPKs may also have kinase-independent roles, which are thought to be due to the binding to targets in the absence of phosphorylation. Protein O-Glc-N-acylation catalyzed by the OGT is regulated by MAPK14, and, although OGT does not seem to be phosphorylated by MAPK14, their interaction increases upon MAPK14 activation induced by glucose deprivation. This interaction may regulate OGT activity by recruiting it to specific targets such as neurofilament H, stimulating its O-Glc-N-acylation. Required in mid-fetal development for the growth of embryo-derived blood vessels in the labyrinth layer of the placenta. Also plays an essential role in developmental and stress-induced erythropoiesis, through regulation of EPO gene expression. Isoform MXI2 activation is stimulated by mitogens and oxidative stress and only poorly phosphorylates ELK1 and ATF2. Isoform EXIP may play a role in the early onset of apoptosis. Phosphorylates S100A9 at 'Thr-113'. Phosphorylates NLRP1 downstream of MAP3K20/ZAK in response to UV-B irradiation and ribosome collisions, promoting activation of the NLRP1 inflammasome and pyroptosis. (Microbial infection) Activated by phosphorylation by M.tuberculosis EsxA in T-cells leading to inhibition of IFN-gamma production; phosphorylation is apparent within 15 minutes and is inhibited by kinase-specific inhibitors SB203580 and siRNA. The protein is Mitogen-activated protein kinase 14 of Homo sapiens (Human).